Reading from the N-terminus, the 213-residue chain is Probable transaldolase (213 aa).

Lys-83 functions as the Schiff-base intermediate with substrate in the catalytic mechanism.

This sequence belongs to the transaldolase family. Type 3B subfamily.

It localises to the cytoplasm. It catalyses the reaction D-sedoheptulose 7-phosphate + D-glyceraldehyde 3-phosphate = D-erythrose 4-phosphate + beta-D-fructose 6-phosphate. Its pathway is carbohydrate degradation; pentose phosphate pathway; D-glyceraldehyde 3-phosphate and beta-D-fructose 6-phosphate from D-ribose 5-phosphate and D-xylulose 5-phosphate (non-oxidative stage): step 2/3. Functionally, transaldolase is important for the balance of metabolites in the pentose-phosphate pathway. This is Probable transaldolase from Geobacillus sp. (strain WCH70).